The chain runs to 237 residues: Leucyl/phenylalanyl-tRNA--protein transferase (237 aa).

The protein belongs to the L/F-transferase family.

Its subcellular location is the cytoplasm. It carries out the reaction N-terminal L-lysyl-[protein] + L-leucyl-tRNA(Leu) = N-terminal L-leucyl-L-lysyl-[protein] + tRNA(Leu) + H(+). It catalyses the reaction N-terminal L-arginyl-[protein] + L-leucyl-tRNA(Leu) = N-terminal L-leucyl-L-arginyl-[protein] + tRNA(Leu) + H(+). The enzyme catalyses L-phenylalanyl-tRNA(Phe) + an N-terminal L-alpha-aminoacyl-[protein] = an N-terminal L-phenylalanyl-L-alpha-aminoacyl-[protein] + tRNA(Phe). Functions in the N-end rule pathway of protein degradation where it conjugates Leu, Phe and, less efficiently, Met from aminoacyl-tRNAs to the N-termini of proteins containing an N-terminal arginine or lysine. This chain is Leucyl/phenylalanyl-tRNA--protein transferase, found in Shewanella baltica (strain OS155 / ATCC BAA-1091).